The following is a 369-amino-acid chain: Probable dual-specificity RNA methyltransferase RlmN (369 aa).

Glu108 functions as the Proton acceptor in the catalytic mechanism. Residues 114–352 (YPDRATLCIS…CTVRDTKGQE (239 aa)) form the Radical SAM core domain. An intrachain disulfide couples Cys121 to Cys357. Cys128, Cys132, and Cys135 together coordinate [4Fe-4S] cluster. Residues 178 to 179 (GE), Ser212, 235 to 237 (SLH), and Asn314 contribute to the S-adenosyl-L-methionine site. Residue Cys357 is the S-methylcysteine intermediate of the active site.

It belongs to the radical SAM superfamily. RlmN family. Requires [4Fe-4S] cluster as cofactor.

Its subcellular location is the cytoplasm. The catalysed reaction is adenosine(2503) in 23S rRNA + 2 reduced [2Fe-2S]-[ferredoxin] + 2 S-adenosyl-L-methionine = 2-methyladenosine(2503) in 23S rRNA + 5'-deoxyadenosine + L-methionine + 2 oxidized [2Fe-2S]-[ferredoxin] + S-adenosyl-L-homocysteine. The enzyme catalyses adenosine(37) in tRNA + 2 reduced [2Fe-2S]-[ferredoxin] + 2 S-adenosyl-L-methionine = 2-methyladenosine(37) in tRNA + 5'-deoxyadenosine + L-methionine + 2 oxidized [2Fe-2S]-[ferredoxin] + S-adenosyl-L-homocysteine. In terms of biological role, specifically methylates position 2 of adenine 2503 in 23S rRNA and position 2 of adenine 37 in tRNAs. This chain is Probable dual-specificity RNA methyltransferase RlmN, found in Corynebacterium efficiens (strain DSM 44549 / YS-314 / AJ 12310 / JCM 11189 / NBRC 100395).